We begin with the raw amino-acid sequence, 1329 residues long: DNA translocase FtsK (1329 aa).

Over 1 to 24 (MSQEYIEDKEVTLTKLSSGRRLLE) the chain is Cytoplasmic. A helical membrane pass occupies residues 25–44 (ALLILIVLFAVWLMAALLSF). Residues 45–74 (NPSDPSWSQTAWHEPIHNLGGMPGAWLADT) lie on the Periplasmic side of the membrane. The helical transmembrane segment at 75–98 (LFFIFGVMAYTIPVIIVGGCWFAW) threads the bilayer. The Cytoplasmic portion of the chain corresponds to 99-115 (RHQSSDEYIDYFAVSLR). A helical transmembrane segment spans residues 116-132 (IIGVLALILTSCGLAAI). Residues 133 to 162 (NADDIWYFASGGVIGSLLSTTLQPLLHSSG) lie on the Periplasmic side of the membrane. A helical membrane pass occupies residues 163–179 (GTIALLCVWAAGLTLFT). Residues 180-1329 (GWSWVTIAEK…REVLAPPPFD (1150 aa)) are Cytoplasmic-facing. The interval 184 to 817 (VTIAEKLGGW…QQPVAPQPQD (634 aa)) is linker. 6 disordered regions span residues 351–386 (VPPA…QSQY), 434–489 (WQAE…TKPA), 577–596 (NSGG…LPRP), 604–639 (RREL…DQYN), 688–712 (RQFA…FSLD), and 741–849 (QPQQ…LTPP). Positions 437-448 (EEQQSTFAPQST) are enriched in polar residues. A compositionally biased stretch (low complexity) spans 449–480 (YQTEQTYQQPAAQEPLYQQPQPVEQQPVVEPE). The span at 619–628 (AAEEKAREAQ) shows a compositional bias: basic and acidic residues. Residues 690–699 (FAQTQQQRYS) are compositionally biased toward polar residues. Low complexity-rich tracts occupy residues 741 to 756 (QPQQ…QQPQ), 764 to 816 (QYQQ…PQPQ), and 836 to 846 (PTTPLPSLDLL). Positions 818 to 943 (TLLHPLLMRN…VGLELPNKKR (126 aa)) are alpha. The interval 944 to 1258 (QTVYLREVLD…DSESEGGAGG (315 aa)) is beta. Residues 974 to 1187 (GEPVVADLAK…FTVSSKIDSR (214 aa)) form the FtsK domain. Residue 994–999 (GSGKSV) participates in ATP binding. Residues 1259-1329 (FDGAEELDPL…REVLAPPPFD (71 aa)) are gamma.

The protein belongs to the FtsK/SpoIIIE/SftA family. As to quaternary structure, homohexamer. Forms a ring that surrounds DNA. Interacts with FtsZ, FtsQ, FtsL and FtsI.

It localises to the cell inner membrane. In terms of biological role, essential cell division protein that coordinates cell division and chromosome segregation. The N-terminus is involved in assembly of the cell-division machinery. The C-terminus functions as a DNA motor that moves dsDNA in an ATP-dependent manner towards the dif recombination site, which is located within the replication terminus region. Translocation stops specifically at Xer-dif sites, where FtsK interacts with the Xer recombinase, allowing activation of chromosome unlinking by recombination. FtsK orienting polar sequences (KOPS) guide the direction of DNA translocation. FtsK can remove proteins from DNA as it translocates, but translocation stops specifically at XerCD-dif site, thereby preventing removal of XerC and XerD from dif. Stoppage of translocation is accompanied by a reduction in ATPase activity. Also stimulates topoisomerase 4 activity. Required for the targeting of FtsQ, FtsL and FtsI to the septum. In Escherichia coli (strain K12), this protein is DNA translocase FtsK (ftsK).